Consider the following 629-residue polypeptide: tRNA uridine 5-carboxymethylaminomethyl modification enzyme MnmG (629 aa).

Residues 13-18, Val125, and Ser180 contribute to the FAD site; that span reads GGGHAG. 273–287 provides a ligand contact to NAD(+); the sequence is GPRYCPSIEDKIHRF. An FAD-binding site is contributed by Gln370.

The protein belongs to the MnmG family. In terms of assembly, homodimer. Heterotetramer of two MnmE and two MnmG subunits. Requires FAD as cofactor.

Its subcellular location is the cytoplasm. In terms of biological role, NAD-binding protein involved in the addition of a carboxymethylaminomethyl (cmnm) group at the wobble position (U34) of certain tRNAs, forming tRNA-cmnm(5)s(2)U34. This Shewanella sp. (strain ANA-3) protein is tRNA uridine 5-carboxymethylaminomethyl modification enzyme MnmG.